A 23-amino-acid chain; its full sequence is Septenin 2c (23 aa).

Expressed in skin granular glands.

The protein localises to the secreted. In terms of biological role, may act as an antimicrobial peptide. This Osteopilus septentrionalis (Cuban treefrog) protein is Septenin 2c.